The chain runs to 595 residues: Aspartate--tRNA(Asp/Asn) ligase (595 aa).

E177 contributes to the L-aspartate binding site. The tract at residues Q201–K204 is aspartate. An L-aspartate-binding site is contributed by R223. Residues R223 to E225 and Q232 each bind ATP. Position 455 (H455) interacts with L-aspartate. E489 lines the ATP pocket. R496 is an L-aspartate binding site. Residue G542–R545 participates in ATP binding.

It belongs to the class-II aminoacyl-tRNA synthetase family. Type 1 subfamily. As to quaternary structure, homodimer.

The protein localises to the cytoplasm. The enzyme catalyses tRNA(Asx) + L-aspartate + ATP = L-aspartyl-tRNA(Asx) + AMP + diphosphate. In terms of biological role, aspartyl-tRNA synthetase with relaxed tRNA specificity since it is able to aspartylate not only its cognate tRNA(Asp) but also tRNA(Asn). Reaction proceeds in two steps: L-aspartate is first activated by ATP to form Asp-AMP and then transferred to the acceptor end of tRNA(Asp/Asn). This Opitutus terrae (strain DSM 11246 / JCM 15787 / PB90-1) protein is Aspartate--tRNA(Asp/Asn) ligase.